Reading from the N-terminus, the 1372-residue chain is DNA-directed RNA polymerase subunit beta (1372 aa).

This sequence belongs to the RNA polymerase beta chain family. As to quaternary structure, the RNAP catalytic core consists of 2 alpha, 1 beta, 1 beta' and 1 omega subunit. When a sigma factor is associated with the core the holoenzyme is formed, which can initiate transcription.

It catalyses the reaction RNA(n) + a ribonucleoside 5'-triphosphate = RNA(n+1) + diphosphate. Functionally, DNA-dependent RNA polymerase catalyzes the transcription of DNA into RNA using the four ribonucleoside triphosphates as substrates. The chain is DNA-directed RNA polymerase subunit beta from Rickettsia bellii (strain OSU 85-389).